Consider the following 332-residue polypeptide: RNA polymerase principal sigma factor HrdD (332 aa).

The segment covering methionine 1–serine 11 has biased composition (basic residues). The segment at methionine 1–alanine 25 is disordered. The segment covering alanine 13–serine 22 has biased composition (low complexity). Positions aspartate 124–valine 137 match the Polymerase core binding motif. The H-T-H motif DNA-binding region spans leucine 294 to lysine 313.

Belongs to the sigma-70 factor family. In terms of assembly, interacts transiently with the RNA polymerase catalytic core.

Its function is as follows. Sigma factors are initiation factors that promote the attachment of RNA polymerase to specific initiation sites and are then released. The sequence is that of RNA polymerase principal sigma factor HrdD (hrdD) from Streptomyces coelicolor (strain ATCC BAA-471 / A3(2) / M145).